Consider the following 636-residue polypeptide: Protein BCAP (636 aa).

Coiled-coil stretches lie at residues 36–97 (LSCL…EQKE), 141–220 (ESEN…WNLQ), 249–325 (YKQR…HGKN), 377–484 (ISSE…ECQE), and 519–631 (LEEE…KMNS).

The protein belongs to the ODF2 family. In terms of tissue distribution, mainly expressed in trachea and testis. Not detected in bone marrow, bladder, leukocytes. Only weakly detected in tongue, stomach, brain and ovaries.

It localises to the cytoplasm. Its subcellular location is the cytoskeleton. The protein resides in the microtubule organizing center. It is found in the centrosome. The protein localises to the centriole. It localises to the centriolar satellite. Its subcellular location is the cilium basal body. In terms of biological role, acts as a suppressor of ciliogenesis, specifically, the initiation of ciliogenesis. The chain is Protein BCAP from Homo sapiens (Human).